We begin with the raw amino-acid sequence, 1466 residues long: Adhesion G protein-coupled receptor L1 (1466 aa).

Positions 1–28 (MARLAAALWSLCVTTVLVTSATQGLSRA) are cleaved as a signal peptide. Residues 29 to 852 (GLPFGLMRRE…EIYQGRINEL (824 aa)) lie on the Extracellular side of the membrane. An SUEL-type lectin domain is found at 40–129 (ACEGYPIELR…KYLEVQYDCV (90 aa)). Disulfide bonds link Cys-41/Cys-71, Cys-50/Cys-128, Cys-83/Cys-115, Cys-96/Cys-102, and Cys-135/Cys-317. Residue Glu-42 participates in alpha-L-rhamnose binding. The N-linked (GlcNAc...) asparagine glycan is linked to Asn-98. 117 to 120 (GTYK) is a binding site for alpha-L-rhamnose. One can recognise an Olfactomedin-like domain in the interval 134–393 (VCPGTLQKVL…VVRYSLEFGP (260 aa)). The segment at 395 to 463 (DPSAGPATSP…APAPSTRRPP (69 aa)) is disordered. Low complexity predominate over residues 400 to 436 (PATSPPLSTTTTARPTPLTSTASPAATTPLRRAPLTT). Residues 448-463 (DLPPATAPAPSTRRPP) are compositionally biased toward pro residues. Cystine bridges form between Cys-475–Cys-510 and Cys-498–Cys-527. Residues Asn-526, Asn-635, Asn-736, Asn-795, Asn-800, and Asn-821 are each glycosylated (N-linked (GlcNAc...) asparagine). The 182-residue stretch at 664–845 (PARFLAAKQN…AVLMAHREIY (182 aa)) folds into the GAIN-B domain. Cystine bridges form between Cys-796-Cys-827 and Cys-815-Cys-829. The tract at residues 796 to 845 (CSFWNYSERSMLGYWSTQGCRLVESNKTHTTCACSHLTNFAVLMAHREIY) is GPS. A helical membrane pass occupies residues 853–873 (LLSVITWVGIVISLVCLAICI). Residues 874–887 (STFCFLRGLQTDRN) lie on the Cytoplasmic side of the membrane. A helical transmembrane segment spans residues 888–908 (TIHKNLCINLFLAELLFLVGI). At 909-914 (DKTQYE) the chain is on the extracellular side. Residues 915–935 (VACPIFAGLLHYFFLAAFSWL) form a helical membrane-spanning segment. The Cytoplasmic portion of the chain corresponds to 936–958 (CLEGVHLYLLLVEVFESEYSRTK). The helical transmembrane segment at 959 to 979 (YYYLGGYCFPALVVGIAAAID) threads the bilayer. Topologically, residues 980 to 996 (YRSYGTEKACWLRVDNY) are extracellular. Residues 997–1017 (FIWSFIGPVSFVIVVNLVFLM) form a helical membrane-spanning segment. Residues 1018-1044 (VTLHKMIRSSSVLKPDSSRLDNIKSWA) lie on the Cytoplasmic side of the membrane. The chain crosses the membrane as a helical span at residues 1045-1065 (LGAIALLFLLGLTWAFGLLFI). Over 1066–1069 (NKES) the chain is Extracellular. A helical transmembrane segment spans residues 1070–1090 (VVMAYLFTTFNAFQGVFIFVF). Over 1091–1466 (HCALQKKVHK…DGQMQLVTSL (376 aa)) the chain is Cytoplasmic. Arg-1188 is modified (omega-N-methylarginine). Ser-1214 bears the Phosphoserine mark. 4 disordered regions span residues 1242-1267 (FNNSYSLRSGDFPPGDGGPEPPRGRN), 1288-1319 (RGASGGAKGPPPEPPVPPVPGVSEDEAGGPGS), 1352-1421 (ESES…SRPP), and 1443-1466 (YLAAPSLEGPGPDGDGQMQLVTSL). A compositionally biased stretch (pro residues) spans 1296-1307 (GPPPEPPVPPVP). Position 1319 is a phosphoserine (Ser-1319). Pro residues predominate over residues 1400-1412 (ALPPPPPAPPGPP). Phosphoserine is present on residues Ser-1448 and Ser-1465.

This sequence belongs to the G-protein coupled receptor 2 family. Adhesion G-protein coupled receptor (ADGR) subfamily. As to quaternary structure, forms a heterodimer, consisting of a large extracellular region (p120) non-covalently linked to a seven-transmembrane moiety (p85). Interacts with syntaxin and with proteins of the SHANK family via the PDZ domain. Interacts (via extracellular domain) with FLRT1, FLRT2 and FLRT3 (via extracellular domain). Post-translationally, autoproteolytically cleaved into 2 subunits, an extracellular subunit and a seven-transmembrane subunit. This proteolytic processing takes place early in the biosynthetic pathway, either in the endoplasmic reticulum or in the early compartment of the Golgi apparatus.

It is found in the cell membrane. The protein localises to the cell projection. It localises to the axon. Its subcellular location is the growth cone. The protein resides in the synapse. It is found in the presynaptic cell membrane. The protein localises to the synaptosome. In terms of biological role, calcium-independent receptor of high affinity for alpha-latrotoxin, an excitatory neurotoxin present in black widow spider venom which triggers massive exocytosis from neurons and neuroendocrine cells. Receptor for TENM2 that mediates heterophilic synaptic cell-cell contact and postsynaptic specialization. Receptor probably implicated in the regulation of exocytosis. The sequence is that of Adhesion G protein-coupled receptor L1 from Mus musculus (Mouse).